A 200-amino-acid chain; its full sequence is FMN-dependent NADH:quinone oxidoreductase (200 aa).

FMN contacts are provided by residues S10, 96-99, and 140-143; these read MYNF and SRGG.

Belongs to the azoreductase type 1 family. As to quaternary structure, homodimer. FMN is required as a cofactor.

It carries out the reaction 2 a quinone + NADH + H(+) = 2 a 1,4-benzosemiquinone + NAD(+). The enzyme catalyses N,N-dimethyl-1,4-phenylenediamine + anthranilate + 2 NAD(+) = 2-(4-dimethylaminophenyl)diazenylbenzoate + 2 NADH + 2 H(+). Functionally, quinone reductase that provides resistance to thiol-specific stress caused by electrophilic quinones. Also exhibits azoreductase activity. Catalyzes the reductive cleavage of the azo bond in aromatic azo compounds to the corresponding amines. In Photorhabdus laumondii subsp. laumondii (strain DSM 15139 / CIP 105565 / TT01) (Photorhabdus luminescens subsp. laumondii), this protein is FMN-dependent NADH:quinone oxidoreductase.